The primary structure comprises 297 residues: Nucleotide-binding protein Bphyt_0592 (297 aa).

Residue 8-15 participates in ATP binding; that stretch reads GISGSGKS. 57-60 serves as a coordination point for GTP; that stretch reads DARS.

The protein belongs to the RapZ-like family.

Its function is as follows. Displays ATPase and GTPase activities. This is Nucleotide-binding protein Bphyt_0592 from Paraburkholderia phytofirmans (strain DSM 17436 / LMG 22146 / PsJN) (Burkholderia phytofirmans).